The primary structure comprises 244 residues: Small ribosomal subunit protein uS2 (244 aa).

The protein belongs to the universal ribosomal protein uS2 family.

The sequence is that of Small ribosomal subunit protein uS2 from Halalkalibacterium halodurans (strain ATCC BAA-125 / DSM 18197 / FERM 7344 / JCM 9153 / C-125) (Bacillus halodurans).